The primary structure comprises 201 residues: Holliday junction branch migration complex subunit RuvA (201 aa).

Residues 1 to 63 (MIAFVSGTVA…EDSLTLYGFA (63 aa)) form a domain I region. Positions 64–139 (DDDERQVFEL…RLGEPIGAPA (76 aa)) are domain II. The interval 139–143 (AVGAP) is flexible linker. Residues 144-201 (VSTGWRDQLHAALIGLGYATREADEAVSAVAPQAEAAGGTPQVGALLKAALQTLNRAR) form a domain III region.

Belongs to the RuvA family. In terms of assembly, homotetramer. Forms an RuvA(8)-RuvB(12)-Holliday junction (HJ) complex. HJ DNA is sandwiched between 2 RuvA tetramers; dsDNA enters through RuvA and exits via RuvB. An RuvB hexamer assembles on each DNA strand where it exits the tetramer. Each RuvB hexamer is contacted by two RuvA subunits (via domain III) on 2 adjacent RuvB subunits; this complex drives branch migration. In the full resolvosome a probable DNA-RuvA(4)-RuvB(12)-RuvC(2) complex forms which resolves the HJ.

It localises to the cytoplasm. In terms of biological role, the RuvA-RuvB-RuvC complex processes Holliday junction (HJ) DNA during genetic recombination and DNA repair, while the RuvA-RuvB complex plays an important role in the rescue of blocked DNA replication forks via replication fork reversal (RFR). RuvA specifically binds to HJ cruciform DNA, conferring on it an open structure. The RuvB hexamer acts as an ATP-dependent pump, pulling dsDNA into and through the RuvAB complex. HJ branch migration allows RuvC to scan DNA until it finds its consensus sequence, where it cleaves and resolves the cruciform DNA. The chain is Holliday junction branch migration complex subunit RuvA from Streptomyces coelicolor (strain ATCC BAA-471 / A3(2) / M145).